We begin with the raw amino-acid sequence, 118 residues long: Large ribosomal subunit protein bL20 (118 aa).

It belongs to the bacterial ribosomal protein bL20 family.

Binds directly to 23S ribosomal RNA and is necessary for the in vitro assembly process of the 50S ribosomal subunit. It is not involved in the protein synthesizing functions of that subunit. The polypeptide is Large ribosomal subunit protein bL20 (Psychromonas ingrahamii (strain DSM 17664 / CCUG 51855 / 37)).